The following is a 438-amino-acid chain: chitinase-like effector (438 aa).

An N-terminal signal peptide occupies residues 1-23 (MFTPLSSVTALLALSSAFLGAQA). Positions 54 to 437 (FIAKGYYTGW…DAIRSGAGLS (384 aa)) constitute a GH18 domain. Residue W416 participates in chitin binding.

This sequence belongs to the glycosyl hydrolase 18 family.

The protein resides in the secreted. In terms of biological role, catalytically impaired chitinase that binds efficiently to chitin, but not to chitosan, xylan, or cellulose. Despite the lack of chitinolytic activity, retains substrate binding specificity and acts as an effector to prevent chitin-triggered immunity by sequestering immunogenic chitin fragments. Does not function in the protection of fungal cell wall against plant hydrolytic enzymes. The chain is chitinase-like effector from Moniliophthora perniciosa (Witches'-broom disease fungus).